The sequence spans 279 residues: Shikimate dehydrogenase (NADP(+)) (279 aa).

Shikimate is bound by residues S17–S19 and T64. K68 (proton acceptor) is an active-site residue. Position 80 (D80) interacts with NADP(+). Shikimate is bound by residues N89 and D105. NADP(+)-binding positions include G129 to S133, N153 to K158, and L221. Position 223 (Y223) interacts with shikimate. G245 contacts NADP(+).

Belongs to the shikimate dehydrogenase family. In terms of assembly, homodimer.

It carries out the reaction shikimate + NADP(+) = 3-dehydroshikimate + NADPH + H(+). It participates in metabolic intermediate biosynthesis; chorismate biosynthesis; chorismate from D-erythrose 4-phosphate and phosphoenolpyruvate: step 4/7. Functionally, involved in the biosynthesis of the chorismate, which leads to the biosynthesis of aromatic amino acids. Catalyzes the reversible NADPH linked reduction of 3-dehydroshikimate (DHSA) to yield shikimate (SA). The polypeptide is Shikimate dehydrogenase (NADP(+)) (Idiomarina loihiensis (strain ATCC BAA-735 / DSM 15497 / L2-TR)).